We begin with the raw amino-acid sequence, 839 residues long: Autophagy-related protein 9A (839 aa).

A disordered region spans residues 1 to 20 (MAQFDTEYQRLEASYSDSPP). Position 2 is an N-acetylalanine (A2). Residues 2-61 (AQFDTEYQRLEASYSDSPPGEEDLLVHVAEGSKSPWHHIENLDLFFSRVYNLHQKNGFTC) lie on the Cytoplasmic side of the membrane. The Tyrosine-based sorting signal signature appears at 8-11 (YQRL). A phosphoserine mark is found at S14, S16, and S18. A helical transmembrane segment spans residues 62–84 (MLIGEIFELMQFLFVVAFTTFLV). Over 85–128 (SCVDYDILFANKMVNHSLHPTEPVKVTLPDAFLPAQVCSARIQE) the chain is Lumenal. The N-linked (GlcNAc...) asparagine glycan is linked to N99. A helical transmembrane segment spans residues 129 to 154 (NGSLITILVIAGVFWIHRLIKFIYNI). At 155–290 (CCYWEIHSFY…ELAQRLSNRI (136 aa)) the chain is on the cytoplasmic side. An intramembrane segment occupies 291 to 301 (LWIGIANFLLC). The Cytoplasmic segment spans residues 302–319 (PLILIWQILYAFFSYAEV). The stretch at 320 to 328 (LKREPGALG) is an intramembrane region. Residues 329–371 (ARCWSLYGRCYLRHFNELEHELQSRLNRGYKPASKYMNCFLSP) are Cytoplasmic-facing. A helical membrane pass occupies residues 372–397 (LLTLLAKNGAFFAGSILAVLIALTIY). Residues 398 to 406 (DEDVLAVEH) are Lumenal-facing. A helical transmembrane segment spans residues 407–424 (VLTTVTLLGVTVTVCRSF). Residues 425–470 (IPDQHMVFCPEQLLRVILAHIHYMPDHWQGNAHRSQTRDEFAQLFQ) are Cytoplasmic-facing. An intramembrane segment occupies 471–480 (YKAVFILEEL). Over 481–483 (LSP) the chain is Cytoplasmic. An intramembrane segment occupies 484–492 (IVTPLILIF). Topologically, residues 493 to 839 (CLRPRALEII…DELPPQVHKV (347 aa)) are cytoplasmic. A phosphoserine mark is found at S656, S735, S738, S741, and S828. 2 disordered regions span residues 656–686 (SPLQPGQAPTGRAHSTMTGSGVDARTASSGS) and 719–839 (QQAQ…VHKV). Over residues 724 to 736 (EPERHLWHRRESD) the composition is skewed to basic and acidic residues. 2 stretches are compositionally biased toward acidic residues: residues 737 to 747 (ESGESAPDEGG) and 823 to 832 (VPEEGSEDEL).

Belongs to the ATG9 family. As to quaternary structure, homotrimer; forms a homotrimer with a central pore that forms a path between the two membrane leaflets. Interacts (via cytoplasmic its C-terminus) with ATG2A. Interacts with SUPT20H. Interacts (via the tyrosine-based sorting signal motif) with AP4M1; promoting association with the AP-4 complex. Interacts with ARFIP1 and ARFIP2. Interacts with PI4K2A and PI4KB. Interacts with ATG4A; the interaction is direct and promotes ATG9A trafficking. Post-translationally, ufmylated in a DDRGK1 dependent manner.

It localises to the preautophagosomal structure membrane. The protein localises to the cytoplasmic vesicle. The protein resides in the autophagosome membrane. Its subcellular location is the golgi apparatus. It is found in the trans-Golgi network membrane. It localises to the late endosome membrane. The protein localises to the recycling endosome membrane. The protein resides in the endoplasmic reticulum membrane. Its subcellular location is the mitochondrion membrane. The catalysed reaction is a 1,2-diacyl-sn-glycero-3-phosphocholine(in) = a 1,2-diacyl-sn-glycero-3-phosphocholine(out). It carries out the reaction a 1,2-diacyl-sn-glycero-3-phospho-L-serine(in) = a 1,2-diacyl-sn-glycero-3-phospho-L-serine(out). It catalyses the reaction a 1,2-diacyl-sn-glycero-3-phosphoethanolamine(in) = a 1,2-diacyl-sn-glycero-3-phosphoethanolamine(out). Phospholipid scramblase involved in autophagy by mediating autophagosomal membrane expansion. Cycles between the preautophagosomal structure/phagophore assembly site (PAS) and the cytoplasmic vesicle pool and supplies membrane for the growing autophagosome. Lipid scramblase activity plays a key role in preautophagosomal structure/phagophore assembly by distributing the phospholipids that arrive through ATG2 (ATG2A or ATG2B) from the cytoplasmic to the luminal leaflet of the bilayer, thereby driving autophagosomal membrane expansion. Also required to supply phosphatidylinositol 4-phosphate to the autophagosome initiation site by recruiting the phosphatidylinositol 4-kinase beta (PI4KB) in a process dependent on ARFIP2, but not ARFIP1. In addition to autophagy, also plays a role in necrotic cell death. In Pongo abelii (Sumatran orangutan), this protein is Autophagy-related protein 9A.